The chain runs to 78 residues: Disintegrin DisBa-01 (78 aa).

One can recognise a Disintegrin domain in the interval 1-78 (GNELLEAGEE…AGCPRNPFHA (78 aa)). Disulfide bonds link C11–C26, C13–C21, C20–C43, C34–C40, C39–C64, and C52–C71. Positions 56–58 (RGD) match the Cell attachment site motif.

Belongs to the venom metalloproteinase (M12B) family. P-II subfamily. P-IIa sub-subfamily. As to quaternary structure, monomer. In terms of tissue distribution, expressed by the venom gland.

The protein resides in the secreted. This recombinant disintegrin antagonizes integrins alpha-IIb/beta-3 (ITGA2B/ITGB3) and alpha-V/beta-3 (ITGAV/ITGB3). On ITGA2B/ITGB3, it interferes with the outside/-in phosphorylation of the focal adhesion kinase (PTK2 / FAK) downstream of the integrin. It strongly inhibits platelet aggregation induced by ADP, thrombin, and collagen, abolishes and reverses dynamic platelet recruitment to immobilized fibrinogen. In vivo, it induces a dramatic increase in the tail bleeding time, and has a strong antithrombotic activity. On ITGAV/ITGB3, it inhibits the adhesion of ITGAV/ITGB3-expressing human microvascular endothelial cell line and murine melanoma cell line to vitronectin (IC(50) are 555 nM and 225 nM, respectively), and transiently inhibits their proliferation without direct cell toxicity. In vivo, it potently inhibits angiogenesis and metastasis, probably due to its capability to strongly inhibit the expression of VEGF and its receptors in endothelial cells. It also inhibits tumor cell migration in vitro. This chain is Disintegrin DisBa-01, found in Bothrops alternatus (Urutu).